The primary structure comprises 25 residues: Large ribosomal subunit protein uL30 (25 aa).

It belongs to the universal ribosomal protein uL30 family. As to quaternary structure, part of the 50S ribosomal subunit.

This chain is Large ribosomal subunit protein uL30 (rpmD), found in Pseudomonas fluorescens biotype A.